Consider the following 325-residue polypeptide: UDP-N-acetylglucosamine transporter (325 aa).

The next 8 helical transmembrane spans lie at 8–24 (VSLG…VLTM), 42–58 (AVVV…ILLV), 138–154 (VYQW…VAFV), 173–189 (FVGL…SGFA), 209–225 (IQLG…GVYI), 246–262 (IVVV…AAVI), 268–284 (ILKG…STLI), and 295–311 (TSVF…ATFL).

This sequence belongs to the nucleotide-sugar transporter family. SLC35A subfamily. As to quaternary structure, interacts with SLC35A2; the interaction is reduced in the presence of SLC35A4. Found in a complex with SLC35A2 and SLC35A4. Interacts with MGAT4B. Post-translationally, O-Glcnacylation regulates the stability of SLC35A3 and the specific complex formation with MGAT4B.

The protein localises to the golgi apparatus membrane. The catalysed reaction is UMP(out) + UDP-N-acetyl-alpha-D-glucosamine(in) = UMP(in) + UDP-N-acetyl-alpha-D-glucosamine(out). Its function is as follows. Transports diphosphate-N-acetylglucosamine (UDP-GlcNAc) from the cytosol into the lumen of the Golgi apparatus, functioning as an antiporter that exchanges UDP-N-acetyl-alpha-D-glucosamine for UMP. May supply UDP-GlcNAc as substrate for Golgi-resident glycosyltransferases that generate highly branched, multiantennary complex N-glycans and keratan sulfate. However, the exact role of SLC35A3 still needs to be elucidated, it could be a member of a catalytically more efficient multiprotein complex rather than function independently as a single transporter. This is UDP-N-acetylglucosamine transporter (SLC35A3) from Homo sapiens (Human).